Consider the following 109-residue polypeptide: Nucleoid-associated protein HI_0442 (109 aa).

It belongs to the YbaB/EbfC family. Homodimer.

It localises to the cytoplasm. The protein resides in the nucleoid. Binds to DNA and alters its conformation. May be involved in regulation of gene expression, nucleoid organization and DNA protection. The chain is Nucleoid-associated protein HI_0442 from Haemophilus influenzae (strain ATCC 51907 / DSM 11121 / KW20 / Rd).